We begin with the raw amino-acid sequence, 274 residues long: Urease accessory protein UreD (274 aa).

This sequence belongs to the UreD family. As to quaternary structure, ureD, UreF and UreG form a complex that acts as a GTP-hydrolysis-dependent molecular chaperone, activating the urease apoprotein by helping to assemble the nickel containing metallocenter of UreC. The UreE protein probably delivers the nickel.

The protein localises to the cytoplasm. In terms of biological role, required for maturation of urease via the functional incorporation of the urease nickel metallocenter. The sequence is that of Urease accessory protein UreD from Klebsiella pneumoniae subsp. pneumoniae (strain ATCC 700721 / MGH 78578).